A 598-amino-acid polypeptide reads, in one-letter code: MKNIRNFSIIAHIDHGKSTLSDRLIQTCGGLSDREMEAQVLDSMDLERERGITIKAQSVTLNYKAKDGETYQLNFIDTPGHVDFSYEVSRSLAACEGALLVVDAGQGVEAQTLANCYTAIEMNLEVVPILNKIDLPAADPERVAEEIEDIVGIDAMEAVRCSAKTGVGIEDVLEEIVHKIPAPEGDPNAPLQALIIDSWFDNYLGVVSLVRIKNGTLRKGDKIKVMSTGQSYNVDRLGIFTPKQVDTTILNCGEVGWVVCAIKDILGAPVGDTLTSHNNPASSVLPGFKKVKPQVYAGLFPISSDDYEAFRDALGKLSLNDASLFYEPENSTALGFGFRCGFLGLLHMEIIQERLEREYDLDLITTAPTVVYEVEKTDGEVIYVDSPSKLPPLNNITEIREPIAECNMLLPQTYLGNVITLCVEKRGVQTNMVYHGNQVALTYEIPMGEVVLDFFDRLKSTSRGYASLDYGFKRFQAADMVRVDIMINGERVDALALIVHKDNAPYRGRELVEKMRELIPRQQFDIAIQAAIGNHIIARSTVKQLRKNVLAKCYGGDVSRKKKLLQKQKEGKKRMKSLGNVEVPQEAFLAILHVGKDK.

The 183-residue stretch at 2–184 (KNIRNFSIIA…EIVHKIPAPE (183 aa)) folds into the tr-type G domain. Residues 14–19 (DHGKST) and 131–134 (NKID) contribute to the GTP site.

This sequence belongs to the TRAFAC class translation factor GTPase superfamily. Classic translation factor GTPase family. LepA subfamily.

It localises to the cell inner membrane. It carries out the reaction GTP + H2O = GDP + phosphate + H(+). In terms of biological role, required for accurate and efficient protein synthesis under certain stress conditions. May act as a fidelity factor of the translation reaction, by catalyzing a one-codon backward translocation of tRNAs on improperly translocated ribosomes. Back-translocation proceeds from a post-translocation (POST) complex to a pre-translocation (PRE) complex, thus giving elongation factor G a second chance to translocate the tRNAs correctly. Binds to ribosomes in a GTP-dependent manner. The chain is Elongation factor 4 from Pasteurella multocida (strain Pm70).